The sequence spans 765 residues: Probable exo-1,4-beta-xylosidase bxlB (765 aa).

Positions 1–25 are cleaved as a signal peptide; it reads MYSSNSRRAASILACIVSLTQLGFA. N-linked (GlcNAc...) asparagine glycosylation is found at N67 and N107. Residue D293 is part of the active site. N-linked (GlcNAc...) asparagine glycosylation is found at N345, N412, N423, N464, and N761.

This sequence belongs to the glycosyl hydrolase 3 family.

It localises to the secreted. The catalysed reaction is Hydrolysis of (1-&gt;4)-beta-D-xylans, to remove successive D-xylose residues from the non-reducing termini.. Its pathway is glycan degradation; xylan degradation. In terms of biological role, xylan 1,4-beta-xylosidase involved in the hydrolysis of xylan, a major structural heterogeneous polysaccharide found in plant biomass representing the second most abundant polysaccharide in the biosphere, after cellulose. This is Probable exo-1,4-beta-xylosidase bxlB (bxlB) from Aspergillus terreus (strain NIH 2624 / FGSC A1156).